The sequence spans 306 residues: Bacitracin transport ATP-binding protein BcrA (306 aa).

Residues 5–233 (IKTTDLTKMY…NRKYLEFQLS (229 aa)) enclose the ABC transporter domain. 37 to 44 (GRNGAGKT) serves as a coordination point for ATP.

This sequence belongs to the ABC transporter superfamily.

Part of the binding-protein-dependent transport system for bacitracin that confer resistance to this antibiotic. Probably responsible for energy coupling to the transport system. The protein is Bacitracin transport ATP-binding protein BcrA (bcrA) of Bacillus licheniformis.